Consider the following 179-residue polypeptide: Ribosome maturation factor RimM (179 aa).

Positions K95–L174 constitute a PRC barrel domain.

It belongs to the RimM family. In terms of assembly, binds ribosomal protein uS19.

Its subcellular location is the cytoplasm. In terms of biological role, an accessory protein needed during the final step in the assembly of 30S ribosomal subunit, possibly for assembly of the head region. Essential for efficient processing of 16S rRNA. May be needed both before and after RbfA during the maturation of 16S rRNA. It has affinity for free ribosomal 30S subunits but not for 70S ribosomes. This chain is Ribosome maturation factor RimM, found in Campylobacter jejuni subsp. jejuni serotype O:2 (strain ATCC 700819 / NCTC 11168).